The chain runs to 54 residues: Ovomucoid (54 aa).

Residues 4-54 (VDCSDYPKPACRMEYMPLCGSDNKTYGNKCNFCNAVVDSNGTLTLSHFGKC) enclose the Kazal-like domain. 3 cysteine pairs are disulfide-bonded: cysteine 6-cysteine 36, cysteine 14-cysteine 33, and cysteine 22-cysteine 54. Asparagine 43 carries an N-linked (GlcNAc...) asparagine glycan.

It localises to the secreted. In Cereopsis novaehollandiae (Cape Barren goose), this protein is Ovomucoid.